The following is a 305-amino-acid chain: MSSLVRPINLGKINHSQSTVKDYILLMKPRVMSLVIFTGFVGMWLAPYSVHPFIAGIAVVCIALGAGSAGAINMWYDRDIDSLMKRTQKRPIVRGVIESDEALSFGLITGFFAVFFMALCVNLLASFLLLFTIFYYICIYTIWLKRRSIQNIVIGGVSGALPPVIGYAAVSNTISLESSILFLIIFIWTPPHSWALALFCNDDYKNCKVPMMPAVKGTLYTKKQILIYSILLFIVSLMPFFIGMNNFIYLIISGILGVVFLYYAGSLFYDTPDNKQAKRFFAYSIFYLFFIFLLLYSTNTISTIS.

9 consecutive transmembrane segments (helical) span residues valine 31–histidine 51, proline 52–isoleucine 72, valine 96–alanine 118, asparagine 122–leucine 144, asparagine 151–serine 171, isoleucine 180–cysteine 200, isoleucine 225–asparagine 245, phenylalanine 247–leucine 267, and phenylalanine 281–isoleucine 301.

Belongs to the UbiA prenyltransferase family. Protoheme IX farnesyltransferase subfamily.

It is found in the cell inner membrane. The enzyme catalyses heme b + (2E,6E)-farnesyl diphosphate + H2O = Fe(II)-heme o + diphosphate. It participates in porphyrin-containing compound metabolism; heme O biosynthesis; heme O from protoheme: step 1/1. Its function is as follows. Converts heme B (protoheme IX) to heme O by substitution of the vinyl group on carbon 2 of heme B porphyrin ring with a hydroxyethyl farnesyl side group. In Rickettsia peacockii (strain Rustic), this protein is Protoheme IX farnesyltransferase.